We begin with the raw amino-acid sequence, 429 residues long: Histidine--tRNA ligase (429 aa).

The protein belongs to the class-II aminoacyl-tRNA synthetase family. Homodimer.

It localises to the cytoplasm. It catalyses the reaction tRNA(His) + L-histidine + ATP = L-histidyl-tRNA(His) + AMP + diphosphate + H(+). This chain is Histidine--tRNA ligase, found in Streptococcus pneumoniae (strain JJA).